Here is a 626-residue protein sequence, read N- to C-terminus: Endo-1,3(4)-beta-glucanase xgeA (626 aa).

A signal peptide spans 1–25 (MSSSLMRRVGSLAASAIIFPGIAHA). A GH16 domain is found at 33–286 (ESWEGEKILN…WAGGVFGDSG (254 aa)). An N-linked (GlcNAc...) asparagine glycan is attached at Asn-61. Catalysis depends on Glu-142, which acts as the Nucleophile. The active-site Proton donor is Glu-147. Residues 477–494 (ASTDAAAATTPAAEPHPS) are compositionally biased toward low complexity. The interval 477–533 (ASTDAAAATTPAAEPHPSNAETPADSKSSADAVTAQATKTTIAVNTPNPATDSASSV) is disordered. Over residues 495-533 (NAETPADSKSSADAVTAQATKTTIAVNTPNPATDSASSV) the composition is skewed to polar residues. Gly-603 carries GPI-anchor amidated glycine lipidation. The propeptide at 604–626 (VGSKVSISASVAIAAFVMLLLVN) is removed in mature form.

This sequence belongs to the glycosyl hydrolase 16 family.

Its subcellular location is the cell membrane. It catalyses the reaction Endohydrolysis of (1-&gt;3)- or (1-&gt;4)-linkages in beta-D-glucans when the glucose residue whose reducing group is involved in the linkage to be hydrolyzed is itself substituted at C-3.. Functionally, mixed-linked glucanase involved in the degradation of complex natural cellulosic substrates. Active on laminarin. lichenan, soluble carboxymethyl cellulose but not on pustulan. The polypeptide is Endo-1,3(4)-beta-glucanase xgeA (xgeA) (Emericella nidulans (strain FGSC A4 / ATCC 38163 / CBS 112.46 / NRRL 194 / M139) (Aspergillus nidulans)).